The primary structure comprises 325 residues: Protein UL76 (325 aa).

The interval 222–286 (ARASAVAGGR…VRGGGAVEPA (65 aa)) is disordered. Positions 247–258 (GPGAQTVSASGA) are enriched in low complexity.

It belongs to the herpesviridae UL24 family.

The protein localises to the virion. The protein resides in the host cytoplasm. It is found in the host nucleus. Its subcellular location is the host nucleolus. It localises to the host Golgi apparatus. Its function is as follows. May participate in nuclear egress of viral particles. Plays a role in the dispersal of several host nucleolar proteins including NCL/nucleolin and NPM1. Since deletion of host NCL/nucleolin negatively impact on nuclear egress, UL76 supposedly acts on this process through its effect on host nucleoli. Induces cell cycle arrest in host cells at the G2/M phase following by apoptosis. The mechanism involves the inhibition of host mitotic complex cyclinB/CDK1. The polypeptide is Protein UL76 (UL76) (Human cytomegalovirus (strain Merlin) (HHV-5)).